The primary structure comprises 302 residues: Sulfate adenylyltransferase subunit 2 (302 aa).

This sequence belongs to the PAPS reductase family. CysD subfamily. In terms of assembly, heterodimer composed of CysD, the smaller subunit, and CysN.

It catalyses the reaction sulfate + ATP + H(+) = adenosine 5'-phosphosulfate + diphosphate. Its pathway is sulfur metabolism; hydrogen sulfide biosynthesis; sulfite from sulfate: step 1/3. Its function is as follows. With CysN forms the ATP sulfurylase (ATPS) that catalyzes the adenylation of sulfate producing adenosine 5'-phosphosulfate (APS) and diphosphate, the first enzymatic step in sulfur assimilation pathway. APS synthesis involves the formation of a high-energy phosphoric-sulfuric acid anhydride bond driven by GTP hydrolysis by CysN coupled to ATP hydrolysis by CysD. The polypeptide is Sulfate adenylyltransferase subunit 2 (Parabacteroides distasonis (strain ATCC 8503 / DSM 20701 / CIP 104284 / JCM 5825 / NCTC 11152)).